The chain runs to 367 residues: Protein valois (367 aa).

WD repeat units follow at residues 101–139, 152–192, and 198–238; these read QAEH…RDSQ, AHPT…MVST, and SHTD…PSST. The interval 309–367 is interaction with csul; sequence LAAMSNLPASVKVANVQAGHEFIYTHQDTHSRLTDAVWTDDSTLITIGHGRKMVTHAIK.

As to quaternary structure, interacts with csul and tud. As to expression, in oocytes, localizes to pole plasm and nuage (at protein level). Expressed stronger in the germline than in somatic cells. In the germarium it sometimes concentrates in perinuclear aggregates that disappear by stage 2 of oogenesis. At later stages, it is uniformly distributed in the nurse cells and oocyte, as well as in young embryos, with no particular enrichment at the posterior or inside the pole cells (at protein level).

The protein resides in the cytoplasm. Involved in specific localization of cytoplasmic proteins during the formation of pole plasm. Required for synthesis and/or stability of oskar protein (osk) and localization of tudor (tud) in both the nuage and posterior pole of the oocyte. Required for normal posterior localization of osk in later stages of oogenesis and for posterior localization of the vasa (vas) protein during the entire process of pole plasm assembly. May act by regulating the complex that contains the arginine N-methyltransferase csul. In Drosophila melanogaster (Fruit fly), this protein is Protein valois (vls).